We begin with the raw amino-acid sequence, 214 residues long: Adenylate kinase (214 aa).

Residue 10 to 15 (GAGKGT) participates in ATP binding. The interval 30-59 (STGDMFRAALKNQTPLGLKAKEYMDKGELV) is NMP. Residues threonine 31, arginine 36, 57 to 59 (ELV), 85 to 88 (GFPR), and glutamine 92 contribute to the AMP site. Positions 126-163 (GRRVCRQCGATYHVKFNPPKVEGVCDACGGELYQRSDD) are LID. Residue arginine 127 participates in ATP binding. 2 residues coordinate Zn(2+): cysteine 130 and cysteine 133. 136–137 (TY) provides a ligand contact to ATP. The Zn(2+) site is built by cysteine 150 and cysteine 153. Residues arginine 160 and arginine 171 each contribute to the AMP site. Lysine 199 is a binding site for ATP.

This sequence belongs to the adenylate kinase family. Monomer.

The protein localises to the cytoplasm. It carries out the reaction AMP + ATP = 2 ADP. Its pathway is purine metabolism; AMP biosynthesis via salvage pathway; AMP from ADP: step 1/1. Its function is as follows. Catalyzes the reversible transfer of the terminal phosphate group between ATP and AMP. Plays an important role in cellular energy homeostasis and in adenine nucleotide metabolism. The chain is Adenylate kinase from Carboxydothermus hydrogenoformans (strain ATCC BAA-161 / DSM 6008 / Z-2901).